The chain runs to 232 residues: Cytidylate kinase (232 aa).

11–19 (GPAGAGKST) is a binding site for ATP.

Belongs to the cytidylate kinase family. Type 1 subfamily.

It localises to the cytoplasm. It carries out the reaction CMP + ATP = CDP + ADP. The enzyme catalyses dCMP + ATP = dCDP + ADP. This is Cytidylate kinase from Roseiflexus castenholzii (strain DSM 13941 / HLO8).